Consider the following 400-residue polypeptide: Mannitol-1-phosphate 5-dehydrogenase (400 aa).

12–23 is a binding site for NAD(+); that stretch reads AVHFGAGNIGRG. The active site involves Lys221.

Belongs to the mannitol dehydrogenase family. As to quaternary structure, monomer.

It carries out the reaction D-mannitol 1-phosphate + NAD(+) = beta-D-fructose 6-phosphate + NADH + H(+). In terms of biological role, catalyzes the NAD(H)-dependent interconversion of D-fructose 6-phosphate and D-mannitol 1-phosphate in the mannitol metabolic pathway. This is Mannitol-1-phosphate 5-dehydrogenase from Pyricularia oryzae (strain Y34) (Rice blast fungus).